Here is a 222-residue protein sequence, read N- to C-terminus: Thiopurine S-methyltransferase (222 aa).

Tryptophan 10, leucine 45, glutamate 66, and arginine 124 together coordinate S-adenosyl-L-methionine.

This sequence belongs to the class I-like SAM-binding methyltransferase superfamily. TPMT family.

It localises to the cytoplasm. The catalysed reaction is S-adenosyl-L-methionine + a thiopurine = S-adenosyl-L-homocysteine + a thiopurine S-methylether.. This is Thiopurine S-methyltransferase from Methylococcus capsulatus (strain ATCC 33009 / NCIMB 11132 / Bath).